An 83-amino-acid polypeptide reads, in one-letter code: Mu-theraphotoxin-Hhn2j 2 (83 aa).

The first 21 residues, 1 to 21 (MKASMFLALAGLVLLFVVGYA), serve as a signal peptide directing secretion. A propeptide spanning residues 22-48 (SESEEKEFPIELLSKIFAVDVFKGEDR) is cleaved from the precursor. 3 cysteine pairs are disulfide-bonded: cysteine 50-cysteine 65, cysteine 57-cysteine 70, and cysteine 64-cysteine 77. Leucine 81 is subject to Leucine amide.

Belongs to the neurotoxin 10 (Hwtx-1) family. 15 (Hntx-3) subfamily. As to quaternary structure, monomer. In terms of tissue distribution, expressed by the venom gland.

Its subcellular location is the secreted. In terms of biological role, lethal neurotoxin. Selectively blocks tetrodotoxin-sensitive voltage-gated sodium channels (Nav). Does not affect tetrodotoxin-resistant voltage-gated sodium channels or calcium channels. This chain is Mu-theraphotoxin-Hhn2j 2, found in Cyriopagopus hainanus (Chinese bird spider).